A 617-amino-acid polypeptide reads, in one-letter code: MLDWQNGQLYSTRFGDVYFSRDSGLEEKQYVFLQGNRLADRFESLQPDTAFSIGETGFGTGLSFLCTWRLFIQIAPLRTSLDFFSVEKYPLDEKELSAALALWPELGPYADELMLRWQRRVPGWNRWSFAGGRVRLTLAIEDVTRALPETHGIDAWFLDGFSPARNPEMWTLQIFHWIARASRAGATFATYTSAGVVRRGLEQAGFQVKKISGFGHKREMLQGDLPGPPPVRLAPTTAIVIGGGIAGCAAASALASRGLIVELLESHTLGAGASGNPIGILHARLSAGMNALHRFVLASYGHALALLDEKIPVDGVMRSECGELQLSFSAEEARRIGKLATLDWPAHVFRPVDAAEASALAGIELSYGGLWFPGSGWLAPPQLCVALLGSQAITLYTGRTVKSLTPTSHGWRVQAEDQRKQAWSLEAEIVVVCTGYQVKSLPALANLPLTPVRGQLTLIPATTASQNLRTIVCGSGYFSPAVAGRHMVGATHRFNDTSINLNVSEHAENLSRLREISPVLRRLSDEVSQDIRQLEQLDGRTSIRGSVPGAMPLVGELLPGLYTSLGHGTRGLITAGISAELVAATACGQLLPLPLSVVNALSPVRRASPAIPVSIKG.

The tRNA (mnm(5)s(2)U34)-methyltransferase stretch occupies residues methionine 1–proline 226. The FAD-dependent cmnm(5)s(2)U34 oxidoreductase stretch occupies residues isoleucine 241–glycine 617.

In the N-terminal section; belongs to the methyltransferase superfamily. tRNA (mnm(5)s(2)U34)-methyltransferase family. It in the C-terminal section; belongs to the DAO family. Requires FAD as cofactor.

The protein resides in the cytoplasm. The enzyme catalyses 5-aminomethyl-2-thiouridine(34) in tRNA + S-adenosyl-L-methionine = 5-methylaminomethyl-2-thiouridine(34) in tRNA + S-adenosyl-L-homocysteine + H(+). Catalyzes the last two steps in the biosynthesis of 5-methylaminomethyl-2-thiouridine (mnm(5)s(2)U) at the wobble position (U34) in tRNA. Catalyzes the FAD-dependent demodification of cmnm(5)s(2)U34 to nm(5)s(2)U34, followed by the transfer of a methyl group from S-adenosyl-L-methionine to nm(5)s(2)U34, to form mnm(5)s(2)U34. In Nitrosospira multiformis (strain ATCC 25196 / NCIMB 11849 / C 71), this protein is tRNA 5-methylaminomethyl-2-thiouridine biosynthesis bifunctional protein MnmC.